Reading from the N-terminus, the 643-residue chain is tRNA 5-methylaminomethyl-2-thiouridine biosynthesis bifunctional protein MnmC (643 aa).

Residues 1–223 (MPDRLVSATL…VDDRLVGDYA (223 aa)) are tRNA (mnm(5)s(2)U34)-methyltransferase. Residues 247–643 (IGAGLAGCAV…LRARRVGSAG (397 aa)) form an FAD-dependent cmnm(5)s(2)U34 oxidoreductase region.

It in the N-terminal section; belongs to the methyltransferase superfamily. tRNA (mnm(5)s(2)U34)-methyltransferase family. The protein in the C-terminal section; belongs to the DAO family. FAD is required as a cofactor.

The protein resides in the cytoplasm. It carries out the reaction 5-aminomethyl-2-thiouridine(34) in tRNA + S-adenosyl-L-methionine = 5-methylaminomethyl-2-thiouridine(34) in tRNA + S-adenosyl-L-homocysteine + H(+). Functionally, catalyzes the last two steps in the biosynthesis of 5-methylaminomethyl-2-thiouridine (mnm(5)s(2)U) at the wobble position (U34) in tRNA. Catalyzes the FAD-dependent demodification of cmnm(5)s(2)U34 to nm(5)s(2)U34, followed by the transfer of a methyl group from S-adenosyl-L-methionine to nm(5)s(2)U34, to form mnm(5)s(2)U34. The sequence is that of tRNA 5-methylaminomethyl-2-thiouridine biosynthesis bifunctional protein MnmC from Burkholderia cenocepacia (strain HI2424).